The chain runs to 340 residues: Ketol-acid reductoisomerase (NADP(+)) (340 aa).

In terms of domain architecture, KARI N-terminal Rossmann spans 3-182 (VQMEYEKDVK…GAARVGLLET (180 aa)). NADP(+)-binding positions include 26–29 (YGSQ), arginine 49, serine 53, and 83–86 (DEIQ). Residue histidine 108 is part of the active site. Glycine 134 serves as a coordination point for NADP(+). The 146-residue stretch at 183–328 (TYKEETEEDL…AELRKAMPFV (146 aa)) folds into the KARI C-terminal knotted domain. Mg(2+) is bound by residues aspartate 191, glutamate 195, glutamate 227, and glutamate 231. A substrate-binding site is contributed by serine 252.

The protein belongs to the ketol-acid reductoisomerase family. Requires Mg(2+) as cofactor.

The enzyme catalyses (2R)-2,3-dihydroxy-3-methylbutanoate + NADP(+) = (2S)-2-acetolactate + NADPH + H(+). The catalysed reaction is (2R,3R)-2,3-dihydroxy-3-methylpentanoate + NADP(+) = (S)-2-ethyl-2-hydroxy-3-oxobutanoate + NADPH + H(+). Its pathway is amino-acid biosynthesis; L-isoleucine biosynthesis; L-isoleucine from 2-oxobutanoate: step 2/4. It participates in amino-acid biosynthesis; L-valine biosynthesis; L-valine from pyruvate: step 2/4. In terms of biological role, involved in the biosynthesis of branched-chain amino acids (BCAA). Catalyzes an alkyl-migration followed by a ketol-acid reduction of (S)-2-acetolactate (S2AL) to yield (R)-2,3-dihydroxy-isovalerate. In the isomerase reaction, S2AL is rearranged via a Mg-dependent methyl migration to produce 3-hydroxy-3-methyl-2-ketobutyrate (HMKB). In the reductase reaction, this 2-ketoacid undergoes a metal-dependent reduction by NADPH to yield (R)-2,3-dihydroxy-isovalerate. This chain is Ketol-acid reductoisomerase (NADP(+)), found in Streptococcus pneumoniae (strain JJA).